We begin with the raw amino-acid sequence, 180 residues long: DNA replication regulator protein HobA (180 aa).

Residues E17, E27, E140, E143, and N176 each coordinate Ca(2+).

As to quaternary structure, forms dimers and homotetramers. Interacts with domains I and II (residues 1-112) of DnaA. In a crystal with domains I and II of DnaA HobA forms tetramers with DnaA fragments bound at the dimer interface of the tetramer. It depends on Ca(2+) as a cofactor.

In terms of biological role, required for DNA replication initiation. Increases binding of DnaA to oriC region. The sequence is that of DNA replication regulator protein HobA from Helicobacter pylori (strain ATCC 700392 / 26695) (Campylobacter pylori).